Consider the following 234-residue polypeptide: Probable septum site-determining protein MinC (234 aa).

Belongs to the MinC family. In terms of assembly, interacts with MinD and FtsZ.

Its function is as follows. Cell division inhibitor that blocks the formation of polar Z ring septums. Rapidly oscillates between the poles of the cell to destabilize FtsZ filaments that have formed before they mature into polar Z rings. Prevents FtsZ polymerization. This is Probable septum site-determining protein MinC from Buchnera aphidicola subsp. Baizongia pistaciae (strain Bp).